Here is a 362-residue protein sequence, read N- to C-terminus: Fe-S cluster assembly protein DRE2 (362 aa).

The tract at residues 1–28 (MAPGLDLTPDFHPPTTTTTTTNNAPPQQ) is disordered. Residues 15 to 28 (TTTTTTTNNAPPQQ) show a composition bias toward low complexity. An N-terminal SAM-like domain region spans residues 24–165 (APPQQRTLLL…KPEYAEEEAV (142 aa)). The linker stretch occupies residues 166–254 (PLRFGKKKAA…EETLLTEEDL (89 aa)). [2Fe-2S] cluster-binding residues include Cys-264, Cys-275, Cys-278, and Cys-280. The segment at 264 to 280 (CQPQPGKKRRACKDCTC) is fe-S binding site A. Residues Cys-325, Cys-328, Cys-336, and Cys-339 each coordinate [4Fe-4S] cluster. 2 short sequence motifs (cx2C motif) span residues 325 to 328 (CGSC) and 336 to 339 (CSDC). Residues 325–339 (CGSCYLGDAFRCSDC) are fe-S binding site B.

This sequence belongs to the anamorsin family. In terms of assembly, monomer. Interacts with TAH18. Interacts with MIA40. [2Fe-2S] cluster is required as a cofactor. Requires [4Fe-4S] cluster as cofactor.

It localises to the cytoplasm. Its subcellular location is the mitochondrion intermembrane space. Functionally, component of the cytosolic iron-sulfur (Fe-S) protein assembly (CIA) machinery required for the maturation of extramitochondrial Fe-S proteins. Part of an electron transfer chain functioning in an early step of cytosolic Fe-S biogenesis, facilitating the de novo assembly of a [4Fe-4S] cluster on the scaffold complex CFD1-NBP35. Electrons are transferred to DRE2 from NADPH via the FAD- and FMN-containing protein TAH18. TAH18-DRE2 are also required for the assembly of the diferric tyrosyl radical cofactor of ribonucleotide reductase (RNR), probably by providing electrons for reduction during radical cofactor maturation in the catalytic small subunit RNR2. In Chaetomium globosum (strain ATCC 6205 / CBS 148.51 / DSM 1962 / NBRC 6347 / NRRL 1970) (Soil fungus), this protein is Fe-S cluster assembly protein DRE2.